The sequence spans 66 residues: Large ribosomal subunit protein bL35 (66 aa).

The protein belongs to the bacterial ribosomal protein bL35 family.

This chain is Large ribosomal subunit protein bL35, found in Deinococcus deserti (strain DSM 17065 / CIP 109153 / LMG 22923 / VCD115).